A 434-amino-acid polypeptide reads, in one-letter code: Nuclear distribution protein PAC1 (434 aa).

Residues 8–40 (QKDDLHKAMLDYLYANNHTAAFNALKESAGITY) form the LisH domain. Positions 57–83 (TSVIRLQKKIMELENRNAALQEELSMS) form a coiled coil. 7 WD repeats span residues 106–147 (GHRA…RTLK), 149–187 (HTKPVNDLDFDHKGHLLVTCSSDLFIKIWDSQNEWKNTK), 191–230 (GHDHAVSAVRFMPGDQLIVSASRDRTIRVFDVASTHQVRT), 233–272 (GHSEWVRCVIPSADGTMLASGSKDQTVRLWDPLTGEPKSE), 275–334 (GHEN…MIRN), 337–378 (GHDN…RIVE), and 401–434 (KKVNGVDSVDAEPEKVVNVVATGSVDETIKIWLP).

It belongs to the WD repeat LIS1/nudF family. As to quaternary structure, self-associates. Interacts with NDL1 and dynein.

It localises to the cytoplasm. Its subcellular location is the cytoskeleton. The protein localises to the spindle pole. Its function is as follows. Positively regulates the activity of the minus-end directed microtubule motor protein dynein. May enhance dynein-mediated microtubule sliding by targeting dynein to the microtubule plus end. Required for nuclear migration during vegetative growth as well as development. Required for retrograde early endosome (EE) transport from the hyphal tip. Required for localization of dynein to the mitotic spindle poles. Recruits additional proteins to the dynein complex at SPBs. The polypeptide is Nuclear distribution protein PAC1 (Coprinopsis cinerea (strain Okayama-7 / 130 / ATCC MYA-4618 / FGSC 9003) (Inky cap fungus)).